A 334-amino-acid chain; its full sequence is S-adenosylmethionine decarboxylase proenzyme (334 aa).

Substrate is bound at residue Phe-7. Residues Glu-8 and Glu-11 contribute to the active site. Position 67 (Glu-67) interacts with substrate. The Schiff-base intermediate with substrate; via pyruvic acid role is filled by Ser-68. Ser-68 is subject to Pyruvic acid (Ser); by autocatalysis. The active-site Proton donor; for catalytic activity is the Cys-82. Phe-223 provides a ligand contact to substrate. Catalysis depends on proton acceptor; for processing activity residues Ser-229 and His-243. Glu-247 serves as a coordination point for substrate. Position 298 is a phosphoserine (Ser-298).

The protein belongs to the eukaryotic AdoMetDC family. As to quaternary structure, heterotetramer of two alpha and two beta chains. Requires pyruvate as cofactor. Is synthesized initially as an inactive proenzyme. Formation of the active enzyme involves a self-maturation process in which the active site pyruvoyl group is generated from an internal serine residue via an autocatalytic post-translational modification. Two non-identical subunits are generated from the proenzyme in this reaction, and the pyruvate is formed at the N-terminus of the alpha chain, which is derived from the carboxyl end of the proenzyme. The post-translation cleavage follows an unusual pathway, termed non-hydrolytic serinolysis, in which the side chain hydroxyl group of the serine supplies its oxygen atom to form the C-terminus of the beta chain, while the remainder of the serine residue undergoes an oxidative deamination to produce ammonia and the pyruvoyl group blocking the N-terminus of the alpha chain.

It catalyses the reaction S-adenosyl-L-methionine + H(+) = S-adenosyl 3-(methylsulfanyl)propylamine + CO2. It functions in the pathway amine and polyamine biosynthesis; S-adenosylmethioninamine biosynthesis; S-adenosylmethioninamine from S-adenosyl-L-methionine: step 1/1. Essential for biosynthesis of the polyamines spermidine and spermine. Promotes maintenance and self-renewal of embryonic stem cells, by maintaining spermine levels. This chain is S-adenosylmethionine decarboxylase proenzyme (AMD1), found in Bos taurus (Bovine).